Reading from the N-terminus, the 338-residue chain is Heat-inducible transcription repressor HrcA (338 aa).

This sequence belongs to the HrcA family.

Its function is as follows. Negative regulator of class I heat shock genes (grpE-dnaK-dnaJ and groELS operons). Prevents heat-shock induction of these operons. In Bacillus mycoides (strain KBAB4) (Bacillus weihenstephanensis), this protein is Heat-inducible transcription repressor HrcA.